The sequence spans 226 residues: N-acetyltransferase family 8 member 3 (226 aa).

2 helical membrane-spanning segments follow: residues 36 to 56 (MLLLPRTLLLLLGVPLTLFLA) and 58 to 78 (GSWLLVLLSILTLFLSLWFLA). An N-acetyltransferase domain is found at 61–220 (LLVLLSILTL…PMINLKYSLT (160 aa)).

The protein belongs to the camello family.

Its subcellular location is the nucleus membrane. It is found in the cytoplasm. The protein localises to the perinuclear region. It carries out the reaction L-lysyl-[protein] + acetyl-CoA = N(6)-acetyl-L-lysyl-[protein] + CoA + H(+). Has histone acetyltransferase activity in vitro, with specificity for histone H4. The protein is N-acetyltransferase family 8 member 3 of Mus musculus (Mouse).